The chain runs to 313 residues: Ribosomal RNA small subunit methyltransferase H (313 aa).

Residues 35-37, Asp-55, Phe-79, Asp-101, and Gln-108 each bind S-adenosyl-L-methionine; that span reads GGH.

It belongs to the methyltransferase superfamily. RsmH family.

It localises to the cytoplasm. It carries out the reaction cytidine(1402) in 16S rRNA + S-adenosyl-L-methionine = N(4)-methylcytidine(1402) in 16S rRNA + S-adenosyl-L-homocysteine + H(+). Its function is as follows. Specifically methylates the N4 position of cytidine in position 1402 (C1402) of 16S rRNA. The protein is Ribosomal RNA small subunit methyltransferase H of Salmonella arizonae (strain ATCC BAA-731 / CDC346-86 / RSK2980).